A 149-amino-acid polypeptide reads, in one-letter code: Nucleoside diphosphate kinase (149 aa).

ATP-binding residues include K9, F57, R85, T91, R102, and N112. H115 serves as the catalytic Pros-phosphohistidine intermediate.

This sequence belongs to the NDK family. Mg(2+) serves as cofactor.

It localises to the cytoplasm. It catalyses the reaction a 2'-deoxyribonucleoside 5'-diphosphate + ATP = a 2'-deoxyribonucleoside 5'-triphosphate + ADP. It carries out the reaction a ribonucleoside 5'-diphosphate + ATP = a ribonucleoside 5'-triphosphate + ADP. In terms of biological role, major role in the synthesis of nucleoside triphosphates other than ATP. The ATP gamma phosphate is transferred to the NDP beta phosphate via a ping-pong mechanism, using a phosphorylated active-site intermediate. The chain is Nucleoside diphosphate kinase from Methanoculleus marisnigri (strain ATCC 35101 / DSM 1498 / JR1).